Reading from the N-terminus, the 1480-residue chain is Nonribosomal peptide synthetase inpA (1480 aa).

Residues 1–17 (MSHSMSSSSSSSSSSSS) are compositionally biased toward low complexity. Positions 1 to 24 (MSHSMSSSSSSSSSSSSSRDEGQS) are disordered. Residues 44-458 (VQDVYPCTPL…QLISPQDLDQ (415 aa)) form a condensation region. Residues 479 to 871 (QRHIDTRPDA…GRKDSQVKIR (393 aa)) form an adenylation region. The 80-residue stretch at 1003-1082 (DSTNKVALRL…GLAAMITSPH (80 aa)) folds into the Carrier domain. An O-(pantetheine 4'-phosphoryl)serine modification is found at S1041. Residues 1117–1436 (KVFLTGATGL…VLAMLQDPQM (320 aa)) form a thioesterase (TE) domain region.

The protein belongs to the NRP synthetase family.

It functions in the pathway secondary metabolite biosynthesis. Nonribosomal peptide synthetase; part of the inp gene cluster that mediates the biosynthesis of fellutamide B, a mycotoxin that acts as a proteasome inhibitor. In the first step of fellutabmide B biosynthesis, inpC activates 3-hydroxydodecanoic acid to generate 3-hydroxydodecanoyl-AMP that is then loaded onto the T0 domain of inpB. The 3-hydroxydodecanoyl-S-phosphopantetheinyl-T0 is sequentially extended with L-Asn and L-Gln by the two CAT modules of inpB. The linear lipodipeptide from inpB is then transferred onto inpA for the addition of the third amino acid, L-Leu. Reductive releasing of the lipotripeptide by the TE domain of inpA produces (2S)-fellutamide B. InpF might be involved in the release and transfer of the lipodipeptide from inpB to inpA. The inp cluster-encoded proteasome subunit inpE confers resistance to internally produced fellutamides. The MFS efflux transporter inpD may contribute to fellutamide resistance as well. The sequence is that of Nonribosomal peptide synthetase inpA from Emericella nidulans (strain FGSC A4 / ATCC 38163 / CBS 112.46 / NRRL 194 / M139) (Aspergillus nidulans).